We begin with the raw amino-acid sequence, 527 residues long: MTGRGQPPKKNDTYDYPRKQPPKNGSYDNYDYPTSTKTRSTNKQRKDSNYPPRETIFEPDLAADPIYSVPRPPSRVPHKLVKVNYKSNLVPITASNSVSELLSLHDETQVTECVEAPLIAKSPDITVYEKMFSVRPKHTLTKLEGKQKMFTRKKKGSFVKIGSNMLEFGESLKSKLHNDSKKSPDEPDGLVHVPVHLLYPPKHQDPVPAFFIFLEGSIGVGKTTLLKSMNGILGGKNVLAFHEPIAYWTDVFSNSLEEVYKLTLPAKVGRTSNSAKLLACQLKFASPLLALKTATDRLSSPKNSLLSSDMWVMFDRHPLSATVVFPYMHFQNGFLSFSHLIQLWSSFKASRGDNIILLNLNSQENLKRVKKRNRKEEKSVSIEHIRLLNNCYHAVYCAWLLVQNFTPEEIVEVCFNAKHITDLSSSKPSFLAKHVSTEDMLKSSIFNTWIEMTKAHRDSCTLMECLLTFCKELEKVQLIHVNVSPFTDDIPGLWASIYTSIRRNSAIKPNRVNWLALEDLARTFNSQ.

Positions 1–57 (MTGRGQPPKKNDTYDYPRKQPPKNGSYDNYDYPTSTKTRSTNKQRKDSNYPPRETIF) are disordered. The span at 9–18 (KKNDTYDYPR) shows a compositional bias: basic and acidic residues. Residues 32–41 (YPTSTKTRST) show a composition bias toward polar residues. 216–223 (GSIGVGKT) contributes to the ATP binding site. The active-site Proton acceptor is Glu-243. Positions 260 and 281 each coordinate substrate. ATP is bound at residue Arg-368. Arg-374 lines the substrate pocket.

Belongs to the herpesviridae thymidine kinase family. In terms of assembly, homodimer.

The catalysed reaction is thymidine + ATP = dTMP + ADP + H(+). Its function is as follows. Catalyzes the transfer of the gamma-phospho group of ATP to thymidine to generate dTMP in the salvage pathway of pyrimidine synthesis. The dTMP serves as a substrate for DNA polymerase during viral DNA replication. Allows the virus to be reactivated and to grow in non-proliferative cells lacking a high concentration of phosphorylated nucleic acid precursors. The chain is Thymidine kinase from Saimiriine herpesvirus 2 (strain 11) (SaHV-2).